We begin with the raw amino-acid sequence, 434 residues long: Galactofuranosyl glycosyltransferase (434 aa).

Topologically, residues Met1–Arg18 are cytoplasmic. A helical; Signal-anchor for type II membrane protein transmembrane segment spans residues Val19–Tyr38. Residues Asn39, Asn100, Asn162, and Asn388 are each glycosylated (N-linked (GlcNAc...) asparagine). The Lumenal portion of the chain corresponds to Asn39–Ser434.

It belongs to the glycosyltransferase 2 family.

Its subcellular location is the endoplasmic reticulum membrane. It functions in the pathway glycolipid biosynthesis; glycosylphosphatidylinositol-anchor biosynthesis. Its function is as follows. Glycosyltransferase that may be responsible for the addition of galactofuranosyl residues to the nascent lipophosphoglycan (LPG) chain. It could alternatively be involved in the synthesis of the galactofuranosyl donor. This chain is Galactofuranosyl glycosyltransferase (LPG1), found in Leishmania donovani.